Here is an 86-residue protein sequence, read N- to C-terminus: Small ribosomal subunit protein bS20 (86 aa).

It belongs to the bacterial ribosomal protein bS20 family.

Binds directly to 16S ribosomal RNA. This is Small ribosomal subunit protein bS20 from Pseudarthrobacter chlorophenolicus (strain ATCC 700700 / DSM 12829 / CIP 107037 / JCM 12360 / KCTC 9906 / NCIMB 13794 / A6) (Arthrobacter chlorophenolicus).